We begin with the raw amino-acid sequence, 143 residues long: Gastrin-releasing peptide (143 aa).

The signal sequence occupies residues Met1 to Ala23. Methionine amide is present on Met50. Positions Ser54–Ser143 are excised as a propeptide. Positions Lys91 to Asp115 are disordered. The span at Gly92–Leu111 shows a compositional bias: polar residues.

The protein belongs to the bombesin/neuromedin-B/ranatensin family.

It is found in the secreted. Its subcellular location is the cytoplasmic vesicle. It localises to the secretory vesicle lumen. The protein localises to the cell projection. The protein resides in the neuron projection. Functionally, stimulates the release of gastrin and other gastrointestinal hormones. Contributes to the perception of prurient stimuli and to the transmission of itch signals in the spinal cord that promote scratching behavior. Contributes primarily to nonhistaminergic itch sensation. In one study, shown to act in the amygdala as part of an inhibitory network which inhibits memory specifically related to learned fear. In another study, shown to act on vasoactive intestinal peptide (VIP)-expressing cells in the auditory cortex, most likely via extrasynaptic diffusion from local and long-range sources, to mediate disinhibition of glutamatergic cells via VIP cell-specific GRPR signaling which leads to enhanced auditory fear memories. Contributes to the regulation of food intake. Inhibits voltage-gated sodium channels but enhances voltage-gated potassium channels in hippocampal neurons. Induces sighing by acting directly on the pre-Botzinger complex, a cluster of several thousand neurons in the ventrolateral medulla responsible for inspiration during respiratory activity. Induces an itch response through activation of receptors present on mast cells, triggering mast cell degranulation. This is Gastrin-releasing peptide (GRP) from Cavia porcellus (Guinea pig).